The chain runs to 349 residues: Phosphoribosylformylglycinamidine cyclo-ligase (349 aa).

The protein belongs to the AIR synthase family.

The protein localises to the cytoplasm. It catalyses the reaction 2-formamido-N(1)-(5-O-phospho-beta-D-ribosyl)acetamidine + ATP = 5-amino-1-(5-phospho-beta-D-ribosyl)imidazole + ADP + phosphate + H(+). The protein operates within purine metabolism; IMP biosynthesis via de novo pathway; 5-amino-1-(5-phospho-D-ribosyl)imidazole from N(2)-formyl-N(1)-(5-phospho-D-ribosyl)glycinamide: step 2/2. The sequence is that of Phosphoribosylformylglycinamidine cyclo-ligase from Trichlorobacter lovleyi (strain ATCC BAA-1151 / DSM 17278 / SZ) (Geobacter lovleyi).